A 378-amino-acid chain; its full sequence is Ribosomal RNA large subunit methyltransferase G (378 aa).

The protein belongs to the methyltransferase superfamily. RlmG family.

Its subcellular location is the cytoplasm. It carries out the reaction guanosine(1835) in 23S rRNA + S-adenosyl-L-methionine = N(2)-methylguanosine(1835) in 23S rRNA + S-adenosyl-L-homocysteine + H(+). In terms of biological role, specifically methylates the guanine in position 1835 (m2G1835) of 23S rRNA. The chain is Ribosomal RNA large subunit methyltransferase G from Salmonella agona (strain SL483).